Consider the following 548-residue polypeptide: Chaperonin GroEL (548 aa).

ATP-binding positions include threonine 30–proline 33, lysine 51, aspartate 87–threonine 91, glycine 415, and aspartate 495.

It belongs to the chaperonin (HSP60) family. Forms a cylinder of 14 subunits composed of two heptameric rings stacked back-to-back. Interacts with the co-chaperonin GroES.

Its subcellular location is the cytoplasm. The catalysed reaction is ATP + H2O + a folded polypeptide = ADP + phosphate + an unfolded polypeptide.. Together with its co-chaperonin GroES, plays an essential role in assisting protein folding. The GroEL-GroES system forms a nano-cage that allows encapsulation of the non-native substrate proteins and provides a physical environment optimized to promote and accelerate protein folding. In Photorhabdus laumondii subsp. laumondii (strain DSM 15139 / CIP 105565 / TT01) (Photorhabdus luminescens subsp. laumondii), this protein is Chaperonin GroEL.